The primary structure comprises 313 residues: Olfactory receptor 5D18 (313 aa).

Residues 1–26 lie on the Extracellular side of the membrane; the sequence is MLLTDRNTSGTTFTLLGFSDYPELQV. The N-linked (GlcNAc...) asparagine glycan is linked to N7. A helical membrane pass occupies residues 27–47; it reads PLFLVFLAIYNVTVLGNIGLI. The Cytoplasmic portion of the chain corresponds to 48-55; that stretch reads VIIKINPK. The helical transmembrane segment at 56–76 threads the bilayer; the sequence is LHTPMYFFLSQLSFVDFCYSS. Residues 77–100 are Extracellular-facing; sequence IIAPKMLVNLVVKDRTISFLGCVV. An intrachain disulfide couples C98 to C190. The helical transmembrane segment at 101 to 121 threads the bilayer; it reads QFFFFCTFVVTESFLLAVMAY. The Cytoplasmic segment spans residues 122 to 140; the sequence is DRFVAICNPLLYTVNMSQK. A helical transmembrane segment spans residues 141-161; that stretch reads LCVLLVVGSYAWGVSCSLELT. Over 162 to 197 the chain is Extracellular; that stretch reads CSALKLCFHGFNTINHFFCEFSSLLSLSCSDTYINQ. Residues 198–218 form a helical membrane-spanning segment; it reads WLLFFLATFNEISTLLIVLTS. The Cytoplasmic portion of the chain corresponds to 219-238; the sequence is YAFIVVTILKMRSVSGRRKA. Residues 239–259 form a helical membrane-spanning segment; the sequence is FSTCASHLTAITIFHGTILFL. The Extracellular portion of the chain corresponds to 260–272; sequence YCVPNSKNSRHTV. A helical membrane pass occupies residues 273–293; sequence KVASVFYTVVIPMLNPLIYSL. Residues 294-313 are Cytoplasmic-facing; sequence RNKDVKDTVTEILDTKVFSY.

The protein belongs to the G-protein coupled receptor 1 family.

It localises to the cell membrane. Functionally, odorant receptor. The chain is Olfactory receptor 5D18 (OR5D18) from Homo sapiens (Human).